The sequence spans 490 residues: Transcription factor MYB101 (490 aa).

The tract at residues 1-21 (MDGGGETTATATMEGRGLKKG) is disordered. HTH myb-type domains lie at 15-67 (GRGL…ANHL) and 68-122 (RPNL…KRRQ). 2 DNA-binding regions (H-T-H motif) span residues 43 to 67 (WNAV…ANHL) and 95 to 118 (WARM…NTRM). The tract at residues 168–206 (YTNSSNTSSSSSSFSSSSSQPSKRLRPDPLVSTNPGLNP) is disordered. Over residues 169–186 (TNSSNTSSSSSSFSSSSS) the composition is skewed to low complexity.

In terms of tissue distribution, present mostly in flowers, siliques and floral shoot tips. Expression is restricted to the subapical pith cells of both vegetative and flowering plants and to the hypocotyl hook. Expressed in pollen grains and pollen tube. Mostly expressed in mature pollen grains, and, to a lower extent, in inflorescences and siliques.

The protein localises to the nucleus. Its function is as follows. Transcription activator. Binds to 5'-CAACTGTC-3' and/or 5'-TAACAAA-3' motif in target gene promoter (e.g. alpha-amylase) to promote their expression. Positive regulator of abscisic acid (ABA) responses leading to growth arrest during seed germination. Promotes the expression of aleurone-related genes (e.g. CP1, CP, GASA1, BXL1 and BXL2) in seeds. Together with MYB33 and MYB65, promotes the programmed cell death (PCD) leading to vacuolation of protein storage vacuoles (PSVs) in the aleurone layers during seed germination. Maybe involved in the regulation of leaves lamina morphogenesis. Involved in pollen grain development. Together with MYB97 and MYB120, functions as a male factor that controls pollen tube-synergid interaction in fertilization. Required for pollen tube growth arrest and sperm cell release in the female gametophyte, probably via the regulation of pollen tube-specific gene expression. The sequence is that of Transcription factor MYB101 from Arabidopsis thaliana (Mouse-ear cress).